A 206-amino-acid chain; its full sequence is Large ribosomal subunit protein uL4 (206 aa).

A disordered region spans residues 45 to 76; sequence RQGTQSAKTRTEVSGGGIKPWRQKGTGRARQG.

Belongs to the universal ribosomal protein uL4 family. As to quaternary structure, part of the 50S ribosomal subunit.

Its function is as follows. One of the primary rRNA binding proteins, this protein initially binds near the 5'-end of the 23S rRNA. It is important during the early stages of 50S assembly. It makes multiple contacts with different domains of the 23S rRNA in the assembled 50S subunit and ribosome. In terms of biological role, forms part of the polypeptide exit tunnel. In Clostridium acetobutylicum (strain ATCC 824 / DSM 792 / JCM 1419 / IAM 19013 / LMG 5710 / NBRC 13948 / NRRL B-527 / VKM B-1787 / 2291 / W), this protein is Large ribosomal subunit protein uL4.